We begin with the raw amino-acid sequence, 195 residues long: Protein SYM1 (195 aa).

Helical transmembrane passes span 21 to 39, 55 to 71, 98 to 115, and 159 to 175; these read GIMT…QVGF, AVVY…DSWY, LLFA…MSIL, and LFSV…FLSF.

Belongs to the peroxisomal membrane protein PXMP2/4 family.

The protein localises to the mitochondrion inner membrane. May be involved in cellular response to stress. Required to maintain mitochondrial DNA (mtDNA) integrity and stability. This is Protein SYM1 (SYM1) from Kluyveromyces lactis (strain ATCC 8585 / CBS 2359 / DSM 70799 / NBRC 1267 / NRRL Y-1140 / WM37) (Yeast).